We begin with the raw amino-acid sequence, 542 residues long: Polysialoglycoprotein (542 aa).

The first 21 residues, 1–21 (MIMGGVRELLLVVMTVGVVKV), serve as a signal peptide directing secretion. Positions 22–120 (SCYPVGKSQK…TSEAATGPSG (99 aa)) are excised as a propeptide. The interval 70–542 (EEYLETNEVE…GPSGDDAMDI (473 aa)) is disordered. Polar residues predominate over residues 78–95 (VESQASPNHGSSPANDAL). Basic and acidic residues predominate over residues 97 to 106 (SEEKLRRVSS). Over residues 107–116 (DDAATSEAAT) the composition is skewed to low complexity. 32 tandem repeats follow at residues 121-133 (DDAT…GPSG), 134-146 (DDAT…GPSG), 147-159 (DDAT…GPSG), 160-172 (DDAT…GPSG), 173-185 (DDAT…GPSG), 186-198 (DDAT…GPSG), 199-211 (DDAT…GPSG), 212-224 (DDAT…GPSG), 225-237 (DDAT…GPSG), 238-250 (DDAT…GPSG), 251-263 (DDAT…GPSG), 264-276 (DDAT…GPSG), 277-289 (DDAT…GPSG), 290-302 (DDAT…GPSG), 303-315 (DDAT…GPSG), 316-328 (DDAT…GPSG), 329-341 (DDAT…GPSG), 342-354 (DDAT…GPSG), 355-367 (DDAT…GPSG), 368-380 (DDAT…GPSG), 381-393 (DDAT…GPSG), 394-406 (DDAT…GPSG), 407-419 (DDAT…GPSG), 420-432 (DDAT…GPSG), 433-445 (DDAT…GPSG), 446-458 (DDAT…GPSG), 459-471 (DDAT…GPSG), 472-484 (DDAT…GPSG), 485-497 (DDAT…GPSG), 498-510 (DDAT…GPSG), 511-523 (DDAT…GPSG), and 524-536 (DDAT…GPSG). The segment at 121 to 536 (DDATSEAATG…TSEAATGPSG (416 aa)) is 32 X 13 AA tandem repeats of D-D-A-T-S-E-A-A-T-G-P-S-G. A glycan (O-linked (GalNAc...) threonine) is linked at Thr124. Ser125 carries O-linked (GalNAc...) serine glycosylation. O-linked (GalNAc...) threonine glycans are attached at residues Thr129 and Thr137. An O-linked (GalNAc...) serine glycan is attached at Ser138. Thr142 and Thr150 each carry an O-linked (GalNAc...) threonine glycan. O-linked (GalNAc...) serine glycosylation occurs at Ser151. O-linked (GalNAc...) threonine glycosylation is found at Thr155 and Thr163. Ser164 carries O-linked (GalNAc...) serine glycosylation. O-linked (GalNAc...) threonine glycosylation is found at Thr168 and Thr176. Ser177 carries an O-linked (GalNAc...) serine glycan. 2 O-linked (GalNAc...) threonine glycosylation sites follow: Thr181 and Thr189. Residue Ser190 is glycosylated (O-linked (GalNAc...) serine). Thr194 and Thr202 each carry an O-linked (GalNAc...) threonine glycan. O-linked (GalNAc...) serine glycosylation is present at Ser203. 2 O-linked (GalNAc...) threonine glycosylation sites follow: Thr207 and Thr215. A glycan (O-linked (GalNAc...) serine) is linked at Ser216. Thr220 and Thr228 each carry an O-linked (GalNAc...) threonine glycan. A glycan (O-linked (GalNAc...) serine) is linked at Ser229. O-linked (GalNAc...) threonine glycans are attached at residues Thr233 and Thr241. O-linked (GalNAc...) serine glycosylation occurs at Ser242. Thr246 and Thr254 each carry an O-linked (GalNAc...) threonine glycan. The O-linked (GalNAc...) serine glycan is linked to Ser255. 2 O-linked (GalNAc...) threonine glycosylation sites follow: Thr259 and Thr267. The O-linked (GalNAc...) serine glycan is linked to Ser268. O-linked (GalNAc...) threonine glycosylation is found at Thr272 and Thr280. The O-linked (GalNAc...) serine glycan is linked to Ser281. Residues Thr285 and Thr293 are each glycosylated (O-linked (GalNAc...) threonine). Residue Ser294 is glycosylated (O-linked (GalNAc...) serine). Thr298 and Thr306 each carry an O-linked (GalNAc...) threonine glycan. An O-linked (GalNAc...) serine glycan is attached at Ser307. O-linked (GalNAc...) threonine glycans are attached at residues Thr311 and Thr319. A glycan (O-linked (GalNAc...) serine) is linked at Ser320. Thr324 and Thr332 each carry an O-linked (GalNAc...) threonine glycan. O-linked (GalNAc...) serine glycosylation is present at Ser333. Residues Thr337 and Thr345 are each glycosylated (O-linked (GalNAc...) threonine). O-linked (GalNAc...) serine glycosylation is present at Ser346. Thr350 and Thr358 each carry an O-linked (GalNAc...) threonine glycan. Ser359 carries an O-linked (GalNAc...) serine glycan. Residues Thr363 and Thr371 are each glycosylated (O-linked (GalNAc...) threonine). Residue Ser372 is glycosylated (O-linked (GalNAc...) serine). Residues Thr376 and Thr384 are each glycosylated (O-linked (GalNAc...) threonine). O-linked (GalNAc...) serine glycosylation is present at Ser385. O-linked (GalNAc...) threonine glycosylation is found at Thr389 and Thr397. The O-linked (GalNAc...) serine glycan is linked to Ser398. O-linked (GalNAc...) threonine glycans are attached at residues Thr402 and Thr410. O-linked (GalNAc...) serine glycosylation occurs at Ser411. Thr415 and Thr423 each carry an O-linked (GalNAc...) threonine glycan. The O-linked (GalNAc...) serine glycan is linked to Ser424. Residues Thr428 and Thr436 are each glycosylated (O-linked (GalNAc...) threonine). Ser437 is a glycosylation site (O-linked (GalNAc...) serine). O-linked (GalNAc...) threonine glycosylation is found at Thr441 and Thr449. Ser450 is a glycosylation site (O-linked (GalNAc...) serine). Residues Thr454 and Thr462 are each glycosylated (O-linked (GalNAc...) threonine). Ser463 carries O-linked (GalNAc...) serine glycosylation. Thr467 and Thr475 each carry an O-linked (GalNAc...) threonine glycan. The O-linked (GalNAc...) serine glycan is linked to Ser476. O-linked (GalNAc...) threonine glycans are attached at residues Thr480 and Thr488. O-linked (GalNAc...) serine glycosylation occurs at Ser489. O-linked (GalNAc...) threonine glycans are attached at residues Thr493 and Thr501. O-linked (GalNAc...) serine glycosylation is present at Ser502. O-linked (GalNAc...) threonine glycosylation is found at Thr506 and Thr514. O-linked (GalNAc...) serine glycosylation is present at Ser515. O-linked (GalNAc...) threonine glycosylation is found at Thr519 and Thr527. Ser528 carries O-linked (GalNAc...) serine glycosylation. O-linked (GalNAc...) threonine glycosylation occurs at Thr532. The propeptide occupies 537–542 (DDAMDI).

In terms of processing, most sialic acid residues exist in the form of polysialyl groups partly capped with deaminoneuraminic acid. In terms of tissue distribution, cortical alveoli of immature ovaries.

In response to egg activation, PSGP is discharged by exocytosis into the perivitelline space, where it undergoes rapid proteolysis into glycotridecapeptides. During fertilization and/or early development the glycotridecapeptides prevent polyspermy or are involved in the formation of a fertilization membrane. This chain is Polysialoglycoprotein, found in Oncorhynchus mykiss (Rainbow trout).